The chain runs to 469 residues: 3-isopropylmalate dehydratase large subunit (469 aa).

Residues cysteine 347, cysteine 407, and cysteine 410 each coordinate [4Fe-4S] cluster.

This sequence belongs to the aconitase/IPM isomerase family. LeuC type 1 subfamily. As to quaternary structure, heterodimer of LeuC and LeuD. Requires [4Fe-4S] cluster as cofactor.

It catalyses the reaction (2R,3S)-3-isopropylmalate = (2S)-2-isopropylmalate. It functions in the pathway amino-acid biosynthesis; L-leucine biosynthesis; L-leucine from 3-methyl-2-oxobutanoate: step 2/4. Its function is as follows. Catalyzes the isomerization between 2-isopropylmalate and 3-isopropylmalate, via the formation of 2-isopropylmaleate. This is 3-isopropylmalate dehydratase large subunit from Prochlorococcus marinus (strain NATL2A).